The chain runs to 213 residues: Large ribosomal subunit protein uL1 (213 aa).

Belongs to the universal ribosomal protein uL1 family. As to quaternary structure, part of the 50S ribosomal subunit.

In terms of biological role, binds directly to 23S rRNA. Probably involved in E site tRNA release. Functionally, protein L1 is also a translational repressor protein, it controls the translation of its operon by binding to its mRNA. The protein is Large ribosomal subunit protein uL1 of Methanosarcina mazei (strain ATCC BAA-159 / DSM 3647 / Goe1 / Go1 / JCM 11833 / OCM 88) (Methanosarcina frisia).